A 166-amino-acid chain; its full sequence is uncharacterized protein (166 aa).

One can recognise an HTH asnC-type domain in the interval 3 to 65 (LTEKETEILE…IDWRKVDGHE (63 aa)). Positions 22–41 (LETIAKMAGIPVNEVKTIID) form a DNA-binding region, H-T-H motif.

This is an uncharacterized protein from Bacillus subtilis (strain 168).